The sequence spans 619 residues: 1-deoxy-D-xylulose-5-phosphate synthase (619 aa).

Thiamine diphosphate-binding positions include H74 and 115-117; that span reads GHS. D146 provides a ligand contact to Mg(2+). Residues 147–148, N175, and Y285 contribute to the thiamine diphosphate site; that span reads GA. N175 contacts Mg(2+). The segment at 289–310 is disordered; it reads EKSPSKYHGIPPSNDKKEEPNK. Thiamine diphosphate is bound at residue E365.

Belongs to the transketolase family. DXPS subfamily. In terms of assembly, homodimer. The cofactor is Mg(2+). Thiamine diphosphate is required as a cofactor.

The enzyme catalyses D-glyceraldehyde 3-phosphate + pyruvate + H(+) = 1-deoxy-D-xylulose 5-phosphate + CO2. It functions in the pathway metabolic intermediate biosynthesis; 1-deoxy-D-xylulose 5-phosphate biosynthesis; 1-deoxy-D-xylulose 5-phosphate from D-glyceraldehyde 3-phosphate and pyruvate: step 1/1. Its function is as follows. Catalyzes the acyloin condensation reaction between C atoms 2 and 3 of pyruvate and glyceraldehyde 3-phosphate to yield 1-deoxy-D-xylulose-5-phosphate (DXP). The sequence is that of 1-deoxy-D-xylulose-5-phosphate synthase from Clostridium botulinum (strain Alaska E43 / Type E3).